The sequence spans 96 residues: Co-chaperonin GroES (96 aa).

It belongs to the GroES chaperonin family. Heptamer of 7 subunits arranged in a ring. Interacts with the chaperonin GroEL.

It localises to the cytoplasm. Functionally, together with the chaperonin GroEL, plays an essential role in assisting protein folding. The GroEL-GroES system forms a nano-cage that allows encapsulation of the non-native substrate proteins and provides a physical environment optimized to promote and accelerate protein folding. GroES binds to the apical surface of the GroEL ring, thereby capping the opening of the GroEL channel. This chain is Co-chaperonin GroES, found in Paraburkholderia phytofirmans (strain DSM 17436 / LMG 22146 / PsJN) (Burkholderia phytofirmans).